A 640-amino-acid chain; its full sequence is Chaperone protein DnaK (640 aa).

Thr-198 bears the Phosphothreonine; by autocatalysis mark. Positions 600–640 are disordered; sequence KTQGAGAEGGEQPHGEQEAGGAAKGEKVVDADFEEVKDDKK. Positions 630–640 are enriched in acidic residues; the sequence is ADFEEVKDDKK.

It belongs to the heat shock protein 70 family.

Acts as a chaperone. The chain is Chaperone protein DnaK from Citrifermentans bemidjiense (strain ATCC BAA-1014 / DSM 16622 / JCM 12645 / Bem) (Geobacter bemidjiensis).